The chain runs to 950 residues: A disintegrin and metalloproteinase with thrombospondin motifs 15 (950 aa).

Positions 1–17 (MLLLGILTLAFAGRTAG) are cleaved as a signal peptide. A propeptide spanning residues 18–212 (GSEPEREVVV…SRRRSGRAKR (195 aa)) is cleaved from the precursor. N-linked (GlcNAc...) asparagine glycosylation occurs at N141. Residues 151 to 172 (SQGAHLLQRRGVPGGPSGDPTS) are disordered. Positions 172–179 (SRCGVASG) match the Cysteine switch motif. Zn(2+) is bound at residue C174. One can recognise a Peptidase M12B domain in the interval 218–427 (RYVETLVVAD…GHGDCLLDQP (210 aa)). 11 disulfide bridges follow: C293-C345, C322-C327, C339-C422, C377-C406, C448-C470, C459-C480, C465-C499, C493-C504, C528-C565, C532-C570, and C543-C555. Zn(2+) is bound at residue H361. E362 is a catalytic residue. Positions 365 and 371 each coordinate Zn(2+). In terms of domain architecture, Disintegrin spans 428–515 (SKPISLPEDL…ERHNLNKHRV (88 aa)). Residues 516–571 (DGSWAKWDPYGPCSRTCGGGVQLARRQCTNPTPANGGKYCEGVRVKYRSCNLEPCP) form the TSP type-1 1 domain. N-linked (GlcNAc...) asparagine glycosylation is found at N591, N623, and N679. Positions 701–838 (AIPAGASSID…SNQVEQPDDR (138 aa)) are spacer. The interval 798 to 822 (FYLPKEPREDKSSHPKDPRGPSVLH) is disordered. Over residues 802 to 816 (KEPREDKSSHPKDPR) the composition is skewed to basic and acidic residues. 2 consecutive TSP type-1 domains span residues 839 to 895 (PPAR…EPCP) and 896 to 949 (TWEL…VLRP).

It depends on Zn(2+) as a cofactor. In terms of processing, the precursor is cleaved by a furin endopeptidase. Glycosylated. Can be O-fucosylated by POFUT2 on a serine or a threonine residue found within the consensus sequence C1-X(2)-(S/T)-C2-G of the TSP type-1 repeat domains where C1 and C2 are the first and second cysteine residue of the repeat, respectively. Fucosylated repeats can then be further glycosylated by the addition of a beta-1,3-glucose residue by the glucosyltransferase, B3GALTL. Fucosylation mediates the efficient secretion of ADAMTS family members. Can be C-glycosylated with one or two mannose molecules on tryptophan residues within the consensus sequence W-X-X-W of the TPRs. Also N-glycosylated. These other glycosylations can also facilitate secretion. As to expression, expressed in fetal liver and kidney, but not in any of the adult tissues examined.

It is found in the secreted. It localises to the extracellular space. The protein resides in the extracellular matrix. The protein localises to the cell surface. Metalloprotease which has proteolytic activity against the proteoglycan VCAN, cleaving it at the 'Glu-1428-|-1429-Ala' site. Cleaves VCAN in the pericellular matrix surrounding myoblasts, facilitating myoblast contact and fusion which is required for skeletal muscle development and regeneration. The polypeptide is A disintegrin and metalloproteinase with thrombospondin motifs 15 (ADAMTS15) (Homo sapiens (Human)).